A 415-amino-acid polypeptide reads, in one-letter code: Histidine--tRNA ligase (415 aa).

It belongs to the class-II aminoacyl-tRNA synthetase family. In terms of assembly, homodimer.

It localises to the cytoplasm. It catalyses the reaction tRNA(His) + L-histidine + ATP = L-histidyl-tRNA(His) + AMP + diphosphate + H(+). The sequence is that of Histidine--tRNA ligase from Clostridium perfringens (strain ATCC 13124 / DSM 756 / JCM 1290 / NCIMB 6125 / NCTC 8237 / Type A).